A 124-amino-acid chain; its full sequence is Protein YebF (124 aa).

The N-terminal stretch at 1–27 is a signal peptide; the sequence is MKTCHIINRVGLSGVALLLTVSFTVSA. The YebF/Cmi domain maps to 36 to 123; it reads KFISCDNLTK…QQNTISYSEL (88 aa). Cys40 and Cys113 are joined by a disulfide.

It belongs to the YebF family.

The protein localises to the secreted. The sequence is that of Protein YebF from Photorhabdus laumondii subsp. laumondii (strain DSM 15139 / CIP 105565 / TT01) (Photorhabdus luminescens subsp. laumondii).